The chain runs to 387 residues: uncharacterized protein (387 aa).

It localises to the mitochondrion. This is an uncharacterized protein from Paramecium tetraurelia.